The sequence spans 908 residues: DNA mismatch repair protein MutS (908 aa).

659 to 666 provides a ligand contact to ATP; sequence GPNMAGKS.

It belongs to the DNA mismatch repair MutS family.

This protein is involved in the repair of mismatches in DNA. It is possible that it carries out the mismatch recognition step. This protein has a weak ATPase activity. The polypeptide is DNA mismatch repair protein MutS (Parvibaculum lavamentivorans (strain DS-1 / DSM 13023 / NCIMB 13966)).